A 140-amino-acid chain; its full sequence is uncharacterized protein (140 aa).

This is an uncharacterized protein from Bacillus subtilis (strain 168).